Consider the following 379-residue polypeptide: Homoserine O-succinyltransferase (379 aa).

The 310-residue stretch at 51 to 360 (NAVLICHALS…DAPQGHDAFL (310 aa)) folds into the AB hydrolase-1 domain. Serine 157 serves as the catalytic Nucleophile. Arginine 227 provides a ligand contact to substrate. Active-site residues include aspartate 323 and histidine 356. Aspartate 357 contacts substrate.

The protein belongs to the AB hydrolase superfamily. MetX family. Homodimer.

The protein localises to the cytoplasm. It carries out the reaction L-homoserine + succinyl-CoA = O-succinyl-L-homoserine + CoA. It functions in the pathway amino-acid biosynthesis; L-methionine biosynthesis via de novo pathway; O-succinyl-L-homoserine from L-homoserine: step 1/1. In terms of biological role, transfers a succinyl group from succinyl-CoA to L-homoserine, forming succinyl-L-homoserine. This chain is Homoserine O-succinyltransferase, found in Ectopseudomonas mendocina (strain ymp) (Pseudomonas mendocina).